Here is a 733-residue protein sequence, read N- to C-terminus: MELGRSSSTPQEEAISPLGVLGTGPSSSPLGKLQALPIGPGAHRGAHSSSAPAGDSSTREPSGAMKIPNRDSGIDSPSSSVASENFPCEESSEGSPSPAILGLPSETASDSRVPQDNPQEEEDSGVGEEPDPKVTLFRPQEDVSLTQCSDPQKLLHIAQELLHTEEAYVKRLHLLDQVFCTKLTEAGIPLEVTTGIFSNISSIYRFHGQFLLPELQKRITEEWDTNPRLGDILQKLAPFLKMYGEYVKNFDRAMGLVSTWTQRSPQFKDVIHTIQKQEVCGNLTLQHHMLEPVQRVPRYELLLKDYLKRLPRDAPDRKDAERSLELISTAADHSNAAIRKMEKMHKLLEVYEQLGGEEDIVNPANELIKEGSIQKLSAKNGTTQDRHLFLFNNVMLYCVPKLRLMGQKLSVREKMDISDLQVQDIVKPNAACTFIITGRKRSLELQTRTEEEKKEWIQVIQATVEKHKQKSETFRAFGGACSQDEEPTLSPDQPVMSTSSVEPAGVADSNGGTPGIESRKSSSKTRRDKEKPGCKSCGETFNSITKRRYRCKLCGEVICRKCSEFKAENSKQSRVCRECFLEEPLVPPSPSSETPTELKQNAEKPPSVDPRPSLLCGTLNLSDDGTTWNEVWAAIPESDPQVLDLLAGSQAGRLLYSIPLSGCNITMPDPEEGLEAGCAWKLHQGSQTWWLSAPSTKLQQCWLKALGTAVHGDTAGDRPGASQPQAPAGTDTP.

Composition is skewed to polar residues over residues 1-11 (MELGRSSSTPQ), 47-60 (HSSS…STRE), and 106-117 (ETASDSRVPQDN). The interval 1 to 134 (MELGRSSSTP…GVGEEPDPKV (134 aa)) is disordered. The segment covering 118–129 (PQEEEDSGVGEE) has biased composition (acidic residues). Residue serine 124 is modified to Phosphoserine. A DH domain is found at 153 to 337 (KLLHIAQELL…STAADHSNAA (185 aa)). In terms of domain architecture, PH 1 spans 366 to 465 (ELIKEGSIQK…WIQVIQATVE (100 aa)). The tract at residues 481-535 (CSQDEEPTLSPDQPVMSTSSVEPAGVADSNGGTPGIESRKSSSKTRRDKEKPGCK) is disordered. Over residues 517–533 (ESRKSSSKTRRDKEKPG) the composition is skewed to basic and acidic residues. The FYVE-type zinc finger occupies 528–584 (DKEKPGCKSCGETFNSITKRRYRCKLCGEVICRKCSEFKAENSKQSRVCRECFLEEP). Cysteine 534, cysteine 537, cysteine 551, cysteine 554, cysteine 559, cysteine 562, cysteine 576, and cysteine 579 together coordinate Zn(2+). Disordered stretches follow at residues 586–612 (VPPS…DPRP) and 712–733 (GDTA…TDTP). A PH 2 domain is found at 612–711 (PSLLCGTLNL…WLKALGTAVH (100 aa)). Threonine 732 carries the post-translational modification Phosphothreonine.

As to expression, detected in adult brain, spleen, lung and skeletal muscle. Detected in embryos from 7 dpc to 17 dpc.

It is found in the cytoplasm. Its subcellular location is the cytoskeleton. In terms of biological role, promotes the formation of filopodia. May activate CDC42, a member of the Ras-like family of Rho- and Rac proteins, by exchanging bound GDP for free GTP. Plays a role in regulating the actin cytoskeleton and cell shape. This is FYVE, RhoGEF and PH domain-containing protein 3 (Fgd3) from Mus musculus (Mouse).